Consider the following 458-residue polypeptide: Transcription factor bHLH10 (458 aa).

Residues 1 to 49 (MEEERESLYEEMGCFDPNTPAEVTVESSFSQAEPPPPPPQVLVAGSTSN) are disordered. The bHLH domain maps to 243-292 (SRKSRTSPTERERRVHFNDRFFDLKNLIPNPTKIDRASIVGEAIDYIKEL). The interval 315-338 (KRARVGEGGGGEDQEEEEDTVNYK) is disordered. Residues 324 to 334 (GGEDQEEEEDT) show a composition bias toward acidic residues.

In terms of assembly, homodimer.

Its subcellular location is the nucleus. This chain is Transcription factor bHLH10 (BHLH10), found in Arabidopsis thaliana (Mouse-ear cress).